A 701-amino-acid chain; its full sequence is Triadin (701 aa).

The tract at residues 1–28 (MTEITAEGNASTTTTVIDSKNGSVPKSP) is disordered. Topologically, residues 1 to 47 (MTEITAEGNASTTTTVIDSKNGSVPKSPGKVLKRTVTEDIVTTFSSP) are cytoplasmic. The segment covering 8–24 (GNASTTTTVIDSKNGSV) has biased composition (polar residues). A helical transmembrane segment spans residues 48–68 (AAWLLVIALIITWSAVAVVMF). Residues 69–701 (DLVDYKNFSA…SSPGQKQQGQ (633 aa)) are Lumenal-facing. Residue asparagine 75 is glycosylated (N-linked (GlcNAc...) asparagine). Over residues 117 to 130 (DGDEDDDDGDEDTD) the composition is skewed to acidic residues. Disordered stretches follow at residues 117-256 (DGDE…KHEQ), 273-654 (GDLR…TKRQ), and 676-701 (FPVT…QQGQ). 6 stretches are compositionally biased toward basic and acidic residues: residues 131 to 256 (KGEI…KHEQ), 303 to 351 (EGKE…KAPE), 365 to 385 (AKKD…EEHP), 391 to 426 (EKKE…KEET), 437 to 485 (GKKE…EVKP), and 492 to 643 (VKKE…KAKE). Residue asparagine 617 is glycosylated (N-linked (GlcNAc...) asparagine). Residues 684–701 (PGESSGQPSSPGQKQQGQ) are compositionally biased toward low complexity.

In terms of assembly, homooligomer of variable subunit number; disulfide-linked. Interacts with CASQ1 and RYR1 in skeletal muscle. Interacts with CASQ2. In terms of processing, phosphorylated by CaMK2. Post-translationally, N-glycosylated. Detected in heart (at protein level). Skeletal and cardiac muscle.

It is found in the sarcoplasmic reticulum membrane. Contributes to the regulation of lumenal Ca2+ release via the sarcoplasmic reticulum calcium release channels RYR1 and RYR2, a key step in triggering skeletal and heart muscle contraction. Required for normal organization of the triad junction, where T-tubules and the sarcoplasmic reticulum terminal cisternae are in close contact. Required for normal skeletal muscle strength. Plays a role in excitation-contraction coupling in the heart and in regulating the rate of heart beats. In Canis lupus familiaris (Dog), this protein is Triadin (TRDN).